We begin with the raw amino-acid sequence, 512 residues long: Probable cytosol aminopeptidase (512 aa).

Residues K284 and D289 each contribute to the Mn(2+) site. The active site involves K296. Positions 307, 366, and 368 each coordinate Mn(2+). R370 is an active-site residue.

The protein belongs to the peptidase M17 family. Requires Mn(2+) as cofactor.

It localises to the cytoplasm. It carries out the reaction Release of an N-terminal amino acid, Xaa-|-Yaa-, in which Xaa is preferably Leu, but may be other amino acids including Pro although not Arg or Lys, and Yaa may be Pro. Amino acid amides and methyl esters are also readily hydrolyzed, but rates on arylamides are exceedingly low.. The enzyme catalyses Release of an N-terminal amino acid, preferentially leucine, but not glutamic or aspartic acids.. Functionally, presumably involved in the processing and regular turnover of intracellular proteins. Catalyzes the removal of unsubstituted N-terminal amino acids from various peptides. This Cupriavidus necator (strain ATCC 17699 / DSM 428 / KCTC 22496 / NCIMB 10442 / H16 / Stanier 337) (Ralstonia eutropha) protein is Probable cytosol aminopeptidase.